A 258-amino-acid polypeptide reads, in one-letter code: Type III pantothenate kinase (258 aa).

6–13 (DAGNTRIK) serves as a coordination point for ATP. Residues Tyr-98 and 105 to 108 (GSDR) each bind substrate. Asp-107 functions as the Proton acceptor in the catalytic mechanism. ATP is bound at residue Thr-131. A substrate-binding site is contributed by Thr-184.

It belongs to the type III pantothenate kinase family. Homodimer. NH4(+) serves as cofactor. It depends on K(+) as a cofactor.

Its subcellular location is the cytoplasm. The enzyme catalyses (R)-pantothenate + ATP = (R)-4'-phosphopantothenate + ADP + H(+). It participates in cofactor biosynthesis; coenzyme A biosynthesis; CoA from (R)-pantothenate: step 1/5. In terms of biological role, catalyzes the phosphorylation of pantothenate (Pan), the first step in CoA biosynthesis. This Herminiimonas arsenicoxydans protein is Type III pantothenate kinase.